The sequence spans 345 residues: tRNA-specific 2-thiouridylase MnmA (345 aa).

Residues leucine 6–serine 13 and leucine 32 each bind ATP. Residue cysteine 92 is the Nucleophile of the active site. A disulfide bridge connects residues cysteine 92 and cysteine 191. An ATP-binding site is contributed by glycine 116. Positions lysine 138–glutamine 140 are interaction with tRNA. Cysteine 191 acts as the Cysteine persulfide intermediate in catalysis. An interaction with tRNA region spans residues arginine 293 to tyrosine 294.

The protein belongs to the MnmA/TRMU family.

It is found in the cytoplasm. It catalyses the reaction S-sulfanyl-L-cysteinyl-[protein] + uridine(34) in tRNA + AH2 + ATP = 2-thiouridine(34) in tRNA + L-cysteinyl-[protein] + A + AMP + diphosphate + H(+). Functionally, catalyzes the 2-thiolation of uridine at the wobble position (U34) of tRNA, leading to the formation of s(2)U34. The sequence is that of tRNA-specific 2-thiouridylase MnmA from Helicobacter hepaticus (strain ATCC 51449 / 3B1).